The sequence spans 162 residues: E3 ubiquitin-protein ligase LAP (162 aa).

Topologically, residues 1–78 (MEGSDNTNTH…RWKCSFMYCN (78 aa)) are cytoplasmic. An RING-CH-type zinc finger spans residues 3–61 (GSDNTNTHCWICKDEYNVSTNFCNCKNEFKIVHKNCLEEWINFSHNTKCKICNGKYNIK). Zn(2+) is bound by residues Cys11, Cys14, Cys25, Cys27, His35, Cys38, Cys51, and Cys54. A helical membrane pass occupies residues 79 to 99 (VPAICVSLICLLLLPLTILLV). The Lumenal portion of the chain corresponds to 100-121 (KFNLKSMLENIENRDLIALISA). Residues 122–142 (MAYSLPCVVGFITVVHILIAL) form a helical membrane-spanning segment. Topologically, residues 143–162 (YDYYLAAKSDNTTYQVYEYI) are cytoplasmic.

It belongs to the poxviridae LAP protein family.

The protein localises to the host membrane. Its subcellular location is the host Golgi apparatus. It localises to the host trans-Golgi network membrane. It is found in the host early endosome membrane. It catalyses the reaction S-ubiquitinyl-[E2 ubiquitin-conjugating enzyme]-L-cysteine + [acceptor protein]-L-lysine = [E2 ubiquitin-conjugating enzyme]-L-cysteine + N(6)-ubiquitinyl-[acceptor protein]-L-lysine.. In terms of biological role, E3 ubiquitin-protein ligase which promotes ubiquitination and subsequent degradation of host MHC-I and CD4 molecules, presumably to prevent lysis of infected cells by cytotoxic T-lymphocytes and NK cell. Binds target molecules through transmembrane interaction. The result of this ubiquitination is the enhancement of the endocytosis of the target chain and the delivery to the lysosome, where it is proteolytically destroyed. In Lumpy skin disease virus (LSDV), this protein is E3 ubiquitin-protein ligase LAP (LW010).